We begin with the raw amino-acid sequence, 76 residues long: Amyloid protein A (76 aa).

It belongs to the SAA family. In terms of tissue distribution, expressed by the liver; secreted in plasma.

The protein localises to the secreted. Major acute phase reactant. Apolipoprotein of the HDL complex. This chain is Amyloid protein A (SAA1), found in Macaca mulatta (Rhesus macaque).